The following is an 83-amino-acid chain: Large ribosomal subunit protein bL31B (83 aa).

The protein belongs to the bacterial ribosomal protein bL31 family. Type B subfamily. Part of the 50S ribosomal subunit.

The polypeptide is Large ribosomal subunit protein bL31B (Lactobacillus johnsonii (strain CNCM I-12250 / La1 / NCC 533)).